We begin with the raw amino-acid sequence, 555 residues long: Formate--tetrahydrofolate ligase (555 aa).

65-72 provides a ligand contact to ATP; it reads TPAGEGKT.

Belongs to the formate--tetrahydrofolate ligase family.

The catalysed reaction is (6S)-5,6,7,8-tetrahydrofolate + formate + ATP = (6R)-10-formyltetrahydrofolate + ADP + phosphate. It functions in the pathway one-carbon metabolism; tetrahydrofolate interconversion. The polypeptide is Formate--tetrahydrofolate ligase (Thermoanaerobacter pseudethanolicus (strain ATCC 33223 / 39E) (Clostridium thermohydrosulfuricum)).